The primary structure comprises 364 residues: Sulfate/thiosulfate import ATP-binding protein CysA (364 aa).

An ABC transporter domain is found at 3-237 (IEIARIKKSF…PATRFVLEFM (235 aa)). An ATP-binding site is contributed by 35–42 (GPSGSGKT).

The protein belongs to the ABC transporter superfamily. Sulfate/tungstate importer (TC 3.A.1.6) family. As to quaternary structure, the complex is composed of two ATP-binding proteins (CysA), two transmembrane proteins (CysT and CysW) and a solute-binding protein (CysP).

Its subcellular location is the cell inner membrane. It carries out the reaction sulfate(out) + ATP + H2O = sulfate(in) + ADP + phosphate + H(+). It catalyses the reaction thiosulfate(out) + ATP + H2O = thiosulfate(in) + ADP + phosphate + H(+). Its function is as follows. Part of the ABC transporter complex CysAWTP involved in sulfate/thiosulfate import. Responsible for energy coupling to the transport system. This chain is Sulfate/thiosulfate import ATP-binding protein CysA, found in Salmonella typhi.